The sequence spans 882 residues: MNAPAKFSTSQIRSDFLAFFEGKGHTIVPSAPLVPGNDPTLLFTNSGMVQFKDVFLGAEKRSYVRAADVQRCLRAGGKHNDLDSVGYTARHHTFFEMLGNWSFGDYFKKDAIAWAWELLTQVWKLPADRLLVTVYHTDEEAFELWRDMIGIPESRIVRIGDNKGAPYASDNFWQMADTGPCGPCTEIFFDHGDHIAGGPPGSPDEDGDRFIEIWNLVFMQFDRQPDGTLVPLPAPCVDTGMGLERLAAILQHVHTNYEIDVFQALIGKASALTGIADLENKSLRVIADHIRACSFLIVDGVLPSNEGRGYVLRRIIRRALRHGWMLGVRQLFFSKMVPTLVELMGEAYPELVVAQETVARALLAEEERFAETLDAGMKIFDDVASRSQEIIPGADAFRLYDTYGFPVDLTADIARERGMRVDMEGFEFAMERQRETARAAGKFGGGVALPADLVATMAPTVFLGYEAQDADALKVVALLKQGRPVDRAEAGDEVIVFTDRTPFYAESGGQVGDSGQLSGTDVSIEVADTQKFAGQFHGHVGRIAEGALKLGDVLSGGIDVQRRGKTILNHSATHLLHAALREVLGTHVQQKGSLVAPDRLRFDFSHFQPITAEELAVIERKVNAEVRTNHSVEVHNMAMQEALDFGAMALFGEKYGERVRVLKMGGYSTELCGGTHVSRTGDIGLFKITSEGGVSSGVRRIEAVTGQGALDYVAEEERRLGEAANLLGGNSTEIVDKVRALTDRQKRLERELESLKAKLASGATADLGASAVDVAGVKVIAVRLEGFDAKALREAMDRLKQQLGDSVIVLAGAAGGKVALVAGVNGGPTGKVKAGELLGHIASQIGGKGGGRPDLAQGGGEDGPALATALQGVPSWVKQHLG.

Zn(2+) is bound by residues histidine 570, histidine 574, cysteine 672, and histidine 676.

It belongs to the class-II aminoacyl-tRNA synthetase family. Zn(2+) serves as cofactor.

The protein resides in the cytoplasm. The enzyme catalyses tRNA(Ala) + L-alanine + ATP = L-alanyl-tRNA(Ala) + AMP + diphosphate. Functionally, catalyzes the attachment of alanine to tRNA(Ala) in a two-step reaction: alanine is first activated by ATP to form Ala-AMP and then transferred to the acceptor end of tRNA(Ala). Also edits incorrectly charged Ser-tRNA(Ala) and Gly-tRNA(Ala) via its editing domain. The chain is Alanine--tRNA ligase from Xanthomonas campestris pv. campestris (strain 8004).